The sequence spans 288 residues: Mycothiol S-conjugate amidase (288 aa).

Residues histidine 12, aspartate 15, and histidine 142 each contribute to the Zn(2+) site.

Belongs to the MshB deacetylase family. Mca subfamily. Monomer. Zn(2+) is required as a cofactor.

It carries out the reaction mycothiol S-conjugate + H2O = an N-acetyl-L-cysteine-S-conjugate + 1D-myo-inositol 2-amino-2-deoxy-alpha-D-glucopyranoside. Partially inhibited by MSH when MSmB (a bimane derivative of MSH) is used as substrate. A mycothiol (MSH, N-acetyl-cysteinyl-glucosaminyl-inositol) S-conjugate amidase, it recycles conjugated MSH to the N-acetyl cysteine conjugate and the MSH precursor. Involved in MSH-dependent detoxification of a number of alkylating agents and antibiotics. Activity is specific for the mycothiol moiety. This is Mycothiol S-conjugate amidase from Mycolicibacterium smegmatis (strain ATCC 700084 / mc(2)155) (Mycobacterium smegmatis).